Reading from the N-terminus, the 215-residue chain is MPYRLYQEEKQKAVNILNDIKVKLYNRGWFPATSGNLSYKLHDDPLYFAITSSGKDKGTVTHEDVIFVDKDAKPIEKTKLKPSAETKVHSQIYQRTDAGCVIHIHTVNNNFISQLYFEDGYVPIKDMEMIKALDIWKEDAFIKVPIIENFFDLDRLAEEAGKSINPEVPGLLIRNHGIYAWGRDEFEAKRHVEAFEFIFEYMRNMIIFKGCKDIF.

2 residues coordinate Zn(2+): His103 and His105.

The protein belongs to the aldolase class II family. MtnB subfamily. It depends on Zn(2+) as a cofactor.

It catalyses the reaction 5-(methylsulfanyl)-D-ribulose 1-phosphate = 5-methylsulfanyl-2,3-dioxopentyl phosphate + H2O. Its pathway is amino-acid biosynthesis; L-methionine biosynthesis via salvage pathway; L-methionine from S-methyl-5-thio-alpha-D-ribose 1-phosphate: step 2/6. Catalyzes the dehydration of methylthioribulose-1-phosphate (MTRu-1-P) into 2,3-diketo-5-methylthiopentyl-1-phosphate (DK-MTP-1-P). The chain is Methylthioribulose-1-phosphate dehydratase from Persephonella marina (strain DSM 14350 / EX-H1).